A 480-amino-acid polypeptide reads, in one-letter code: tRNA-2-methylthio-N(6)-dimethylallyladenosine synthase (480 aa).

The 117-residue stretch at 29-145 folds into the MTTase N-terminal domain; that stretch reads GSFWIQTFGC…LEALLTQVDN (117 aa). C38, C74, C108, C180, C184, and C187 together coordinate [4Fe-4S] cluster. The region spanning 166–403 is the Radical SAM core domain; sequence RDSTICAWVN…NALVERVALQ (238 aa). The TRAM domain maps to 406–474; it reads SRYSGKVEQV…AFSLSGTPCD (69 aa).

Belongs to the methylthiotransferase family. MiaB subfamily. Monomer. [4Fe-4S] cluster serves as cofactor.

It localises to the cytoplasm. It catalyses the reaction N(6)-dimethylallyladenosine(37) in tRNA + (sulfur carrier)-SH + AH2 + 2 S-adenosyl-L-methionine = 2-methylsulfanyl-N(6)-dimethylallyladenosine(37) in tRNA + (sulfur carrier)-H + 5'-deoxyadenosine + L-methionine + A + S-adenosyl-L-homocysteine + 2 H(+). In terms of biological role, catalyzes the methylthiolation of N6-(dimethylallyl)adenosine (i(6)A), leading to the formation of 2-methylthio-N6-(dimethylallyl)adenosine (ms(2)i(6)A) at position 37 in tRNAs that read codons beginning with uridine. This is tRNA-2-methylthio-N(6)-dimethylallyladenosine synthase from Prochlorococcus marinus (strain MIT 9303).